The primary structure comprises 699 residues: UvrABC system protein C (699 aa).

Residues Met-1–Ala-51 show a composition bias toward low complexity. The disordered stretch occupies residues Met-1 to Val-59. The GIY-YIG domain occupies Thr-92 to Val-170. A UVR domain is found at Arg-280 to Ile-315.

It belongs to the UvrC family. Interacts with UvrB in an incision complex.

It is found in the cytoplasm. Its function is as follows. The UvrABC repair system catalyzes the recognition and processing of DNA lesions. UvrC both incises the 5' and 3' sides of the lesion. The N-terminal half is responsible for the 3' incision and the C-terminal half is responsible for the 5' incision. This Rhodopseudomonas palustris (strain BisB18) protein is UvrABC system protein C.